Reading from the N-terminus, the 470-residue chain is Neuraminidase (470 aa).

The Intravirion portion of the chain corresponds to 1–14; that stretch reads MNPNQKIIAIGSAS. The interval 11–32 is involved in apical transport and lipid raft association; sequence GSASLGILILNVILHVVSIIVT. The chain crosses the membrane as a helical span at residues 15–35; sequence LGILILNVILHVVSIIVTVLV. A hypervariable stalk region region spans residues 32–86; that stretch reads TVLVLNNNGTGLNCNGTIIREYNETVRVERITQWYNTNTIEYIERPSNEYYMNNT. Topologically, residues 36-470 are virion surface; sequence LNNNGTGLNC…AILPFDIDKI (435 aa). N-linked (GlcNAc...) asparagine; by host glycosylation is found at asparagine 39, asparagine 46, asparagine 54, and asparagine 84. Residues 89 to 470 form a head of neuraminidase region; the sequence is LCEAQGFAPF…AILPFDIDKI (382 aa). 8 disulfides stabilise this stretch: cysteine 90/cysteine 417, cysteine 122/cysteine 127, cysteine 182/cysteine 229, cysteine 231/cysteine 236, cysteine 277/cysteine 290, cysteine 279/cysteine 288, cysteine 316/cysteine 335, and cysteine 421/cysteine 446. Arginine 116 provides a ligand contact to substrate. Asparagine 144 carries an N-linked (GlcNAc...) asparagine; by host glycan. The active-site Proton donor/acceptor is the aspartate 149. Arginine 150 contributes to the substrate binding site. Position 275–276 (275–276) interacts with substrate; sequence EE. A substrate-binding site is contributed by arginine 291. Aspartate 292 serves as a coordination point for Ca(2+). N-linked (GlcNAc...) asparagine; by host glycosylation occurs at asparagine 293. Positions 296 and 322 each coordinate Ca(2+). Arginine 368 contacts substrate. N-linked (GlcNAc...) asparagine; by host glycosylation occurs at asparagine 398. The Nucleophile role is filled by tyrosine 402.

This sequence belongs to the glycosyl hydrolase 34 family. As to quaternary structure, homotetramer. Ca(2+) is required as a cofactor. Post-translationally, N-glycosylated.

It localises to the virion membrane. The protein resides in the host apical cell membrane. The enzyme catalyses Hydrolysis of alpha-(2-&gt;3)-, alpha-(2-&gt;6)-, alpha-(2-&gt;8)- glycosidic linkages of terminal sialic acid residues in oligosaccharides, glycoproteins, glycolipids, colominic acid and synthetic substrates.. With respect to regulation, inhibited by the neuraminidase inhibitors zanamivir (Relenza) and oseltamivir (Tamiflu). These drugs interfere with the release of progeny virus from infected cells and are effective against all influenza strains. Resistance to neuraminidase inhibitors is quite rare. Catalyzes the removal of terminal sialic acid residues from viral and cellular glycoconjugates. Cleaves off the terminal sialic acids on the glycosylated HA during virus budding to facilitate virus release. Additionally helps virus spread through the circulation by further removing sialic acids from the cell surface. These cleavages prevent self-aggregation and ensure the efficient spread of the progeny virus from cell to cell. Otherwise, infection would be limited to one round of replication. Described as a receptor-destroying enzyme because it cleaves a terminal sialic acid from the cellular receptors. May facilitate viral invasion of the upper airways by cleaving the sialic acid moieties on the mucin of the airway epithelial cells. Likely to plays a role in the budding process through its association with lipid rafts during intracellular transport. May additionally display a raft-association independent effect on budding. Plays a role in the determination of host range restriction on replication and virulence. Sialidase activity in late endosome/lysosome traffic seems to enhance virus replication. In Influenza A virus (strain A/Equine/Kentucky/1/1981), this protein is Neuraminidase.